The chain runs to 195 residues: GTP-dependent dephospho-CoA kinase (195 aa).

Residues Asp-49, Val-50, Asp-68, Glu-127, and Asp-150 each coordinate GTP.

It belongs to the GTP-dependent DPCK family.

It carries out the reaction 3'-dephospho-CoA + GTP = GDP + CoA + H(+). It participates in cofactor biosynthesis; coenzyme A biosynthesis. In terms of biological role, catalyzes the GTP-dependent phosphorylation of the 3'-hydroxyl group of dephosphocoenzyme A to form coenzyme A (CoA). The chain is GTP-dependent dephospho-CoA kinase from Methanosarcina acetivorans (strain ATCC 35395 / DSM 2834 / JCM 12185 / C2A).